Consider the following 592-residue polypeptide: V-type ATP synthase alpha chain (592 aa).

Position 233–240 (233–240 (GPFGSGKT)) interacts with ATP.

This sequence belongs to the ATPase alpha/beta chains family.

The catalysed reaction is ATP + H2O + 4 H(+)(in) = ADP + phosphate + 5 H(+)(out). Functionally, produces ATP from ADP in the presence of a proton gradient across the membrane. The V-type alpha chain is a catalytic subunit. This chain is V-type ATP synthase alpha chain, found in Clostridium botulinum (strain Okra / Type B1).